A 1892-amino-acid chain; its full sequence is Protein TIC 214 (1892 aa).

The next 6 membrane-spanning stretches (helical) occupy residues 18–38, 64–84, 87–107, 124–144, 172–192, and 221–241; these read IINS…FSIG, FITG…HLAL, PHTI…WNNH, LSIQ…HFIL, VGWL…LVWI, and IFSI…PSPI. 3 disordered regions span residues 250–300, 794–814, and 1581–1609; these read SKTE…EGWD, REEQ…ENKR, and RIQE…LGPV. The segment covering 256 to 268 has biased composition (acidic residues); it reads VESEEEKDVEIET. A compositionally biased stretch (basic and acidic residues) spans 1581 to 1602; that stretch reads RIQEEKEPASQGEKERGSDIEN.

It belongs to the TIC214 family. As to quaternary structure, part of the Tic complex.

The protein resides in the plastid. It localises to the chloroplast inner membrane. Involved in protein precursor import into chloroplasts. May be part of an intermediate translocation complex acting as a protein-conducting channel at the inner envelope. The sequence is that of Protein TIC 214 from Nicotiana tomentosiformis (Tobacco).